The primary structure comprises 222 residues: MCPVWLLVAVVVVGGSRGAVSQCWEHPSCQELNSDSSMMECIQLCHSDLTAEKPVIPGNAHLQPPPLPDPSSSSSFILPSSSSSSSSPQSKRSYSMEHFRWGKPVGRKRRPVKVYTSNGVEEESAEVFPGEMRRRELASELLAAAEEEEEKAQEVMAEEEEEQKQLLQEKKDGSYKMKHFRWSGPPASKRYGGFMKSWDERSQRPLLTLFKNVINKDGQQQK.

Positions 1–18 (MCPVWLLVAVVVVGGSRG) are cleaved as a signal peptide. Residues 19–90 (AVSQCWEHPS…SSSSSSSPQS (72 aa)) constitute a propeptide that is removed on maturation. Disordered stretches follow at residues 56–98 (IPGN…SMEH) and 148–170 (EEEK…LQEK). Residues 70 to 93 (PSSSSSFILPSSSSSSSSPQSKRS) are compositionally biased toward low complexity. A compositionally biased stretch (acidic residues) spans 148-162 (EEEKAQEVMAEEEEE).

It belongs to the POMC family. Post-translationally, specific enzymatic cleavages at paired basic residues yield the different active peptides.

It localises to the secreted. Functionally, stimulates the adrenal glands to release cortisol. In terms of biological role, anorexigenic peptide. Increases the pigmentation of skin by increasing melanin production in melanocytes. Its function is as follows. Increases the pigmentation of skin by increasing melanin production in melanocytes. Endogenous orexigenic opiate. Functionally, endogenous opiate. The polypeptide is Pro-opiomelanocortin (pomc) (Thunnus obesus (Bigeye tuna)).